We begin with the raw amino-acid sequence, 1043 residues long: BAG family molecular chaperone regulator 6 (1043 aa).

Disordered regions lie at residues lysine 253–valine 294, aspartate 311–isoleucine 331, valine 343–histidine 366, asparagine 410–arginine 500, and serine 533–phenylalanine 566. Basic and acidic residues-rich tracts occupy residues aspartate 311–proline 324, valine 343–asparagine 357, serine 416–glutamine 443, and lysine 478–lysine 487. The span at valine 534–glutamate 543 shows a compositional bias: polar residues. The segment covering lysine 550 to phenylalanine 566 has biased composition (basic and acidic residues). The IQ domain maps to glutamate 568 to alanine 597. Positions glutamate 595–lysine 672 constitute a BAG domain. Residues serine 724–alanine 741 are compositionally biased toward basic and acidic residues. 4 disordered regions span residues serine 724–glutamate 749, alanine 764–methionine 799, glutamate 817–glutamate 975, and glutamate 1015–leucine 1043. Residues alanine 840–glutamate 852 are compositionally biased toward low complexity. Residues asparagine 853–glutamate 871 are compositionally biased toward basic and acidic residues. 2 stretches are compositionally biased toward polar residues: residues glutamine 885–glycine 899 and serine 919–glutamate 932. A compositionally biased stretch (basic and acidic residues) spans glutamine 934–proline 951. Residues glycine 971–threonine 1024 adopt a coiled-coil conformation. Residues leucine 1018–serine 1031 are compositionally biased toward basic residues. A compositionally biased stretch (polar residues) spans methionine 1034–leucine 1043.

In terms of assembly, binds to the ATPase domain of HSP70/HSC70 chaperones. Interacts with calmodulins CAM1, CAM2, CAM3, CAM4, CAM6 and CAM7. Interacts with BAGP1 and APCB1. As to expression, detected in stems, leaves, flowers and roots.

Functionally, co-chaperone that regulates diverse cellular pathways, such as programmed cell death and stress responses. Involved in plant basal resistance. Involved in basal heat response through the regulation of the heat induced small HSP (sHSP) transcriptional cascade. Induces autophagy. In Arabidopsis thaliana (Mouse-ear cress), this protein is BAG family molecular chaperone regulator 6.